The chain runs to 397 residues: Elongation factor Tu (397 aa).

The tr-type G domain occupies 10 to 206 (KPHVNIGTIG…AVDEYIPTPE (197 aa)). Residues 19–26 (GHVDHGKT) are G1. 19–26 (GHVDHGKT) lines the GTP pocket. Mg(2+) is bound at residue T26. The tract at residues 60 to 64 (GITIS) is G2. The interval 81-84 (DCPG) is G3. Residues 81–85 (DCPGH) and 136–139 (NKAD) each bind GTP. The interval 136 to 139 (NKAD) is G4. A G5 region spans residues 174–176 (SAL).

The protein belongs to the TRAFAC class translation factor GTPase superfamily. Classic translation factor GTPase family. EF-Tu/EF-1A subfamily. In terms of assembly, monomer.

It localises to the cytoplasm. It carries out the reaction GTP + H2O = GDP + phosphate + H(+). In terms of biological role, GTP hydrolase that promotes the GTP-dependent binding of aminoacyl-tRNA to the A-site of ribosomes during protein biosynthesis. In Clostridium tetani (strain Massachusetts / E88), this protein is Elongation factor Tu.